The sequence spans 352 residues: Protein NDRG4 (352 aa).

Phosphoserine is present on residues Lys-293, Ser-298, Ser-317, and Ser-323. The segment at 301 to 352 (AVPSASMTRLARSRTASLTSASSVDGSRPQPCAHSDSSEGMGQVNHTMEVSC) is disordered. The segment covering 308 to 323 (TRLARSRTASLTSASS) has biased composition (low complexity). Polar residues predominate over residues 338-352 (SEGMGQVNHTMEVSC).

It belongs to the NDRG family. In terms of tissue distribution, predominantly expressed in the brain (at protein level). Detected in neurons of various parts of brain, including the olfactory bulb, olfactory tuberculum, cerebral cortex, striatum, hippocampus, dentate gyrus, thalamus, hypothalamus, mesencephalon, cerebellum, pons and medulla oblongata.

The protein resides in the cytoplasm. It localises to the cytosol. Functionally, contributes to the maintenance of intracerebral BDNF levels within the normal range, which is necessary for the preservation of spatial learning and the resistance to neuronal cell death caused by ischemic stress. May enhance growth factor-induced ERK1 and ERK2 phosphorylation. May attenuate NGF-promoted ELK1 phosphorylation in a microtubule-dependent manner. The protein is Protein NDRG4 (Ndrg4) of Mus musculus (Mouse).